A 194-amino-acid chain; its full sequence is Small ribosomal subunit protein eS7 (194 aa).

The protein belongs to the eukaryotic ribosomal protein eS7 family.

This Caenorhabditis elegans protein is Small ribosomal subunit protein eS7 (rps-7).